A 96-amino-acid chain; its full sequence is Beta-defensin 20 (96 aa).

A signal peptide spans 1 to 21 (MKLLQVLLVLLFVALADGAQP). Disulfide bonds link C24/C52, C32/C46, and C36/C53.

It belongs to the beta-defensin family.

It is found in the secreted. In terms of biological role, has antibacterial activity. The protein is Beta-defensin 20 (Defb20) of Mus musculus (Mouse).